Reading from the N-terminus, the 84-residue chain is U4-theraphotoxin-Hhn1a (84 aa).

The N-terminal stretch at Met1 to Ala22 is a signal peptide. Residues Glu23–Arg47 constitute a propeptide that is removed on maturation. Cystine bridges form between Cys51-Cys65, Cys55-Cys76, and Cys70-Cys81.

This sequence belongs to the neurotoxin 12 (Hwtx-2) family. 02 (Hwtx-2) subfamily. Expressed by the venom gland.

Its subcellular location is the secreted. In terms of biological role, postsynaptic neurotoxin. This is U4-theraphotoxin-Hhn1a from Cyriopagopus hainanus (Chinese bird spider).